The sequence spans 138 residues: MLQQTLCLIKPDATQRNLIGKIISYLENAGLKIKAIKKLQLTQAQAEKFYLEHQDKPFFASLVGFMISAPIVAIVLEGENAIAHYRELMGATNPEQREAGTIRALYAISNQENSVHGSDSETSAKREIDYFFSKEEIC.

6 residues coordinate ATP: K10, F58, R86, T92, R103, and N113. H116 (pros-phosphohistidine intermediate) is an active-site residue.

This sequence belongs to the NDK family. Homotetramer. The cofactor is Mg(2+).

The protein localises to the cytoplasm. It catalyses the reaction a 2'-deoxyribonucleoside 5'-diphosphate + ATP = a 2'-deoxyribonucleoside 5'-triphosphate + ADP. The catalysed reaction is a ribonucleoside 5'-diphosphate + ATP = a ribonucleoside 5'-triphosphate + ADP. Major role in the synthesis of nucleoside triphosphates other than ATP. The ATP gamma phosphate is transferred to the NDP beta phosphate via a ping-pong mechanism, using a phosphorylated active-site intermediate. In Haemophilus ducreyi (strain 35000HP / ATCC 700724), this protein is Nucleoside diphosphate kinase.